A 790-amino-acid polypeptide reads, in one-letter code: Pentatricopeptide repeat-containing protein At1g25360 (790 aa).

16 PPR repeats span residues 48–82 (RAHILNRLIDVYCKSSELNYARQLFDEISEPDKIA), 84–109 (TTMVSGYCASGDITLARGVFEKAPVC), 112–146 (DTVMYNAMITGFSHNNDGYSAINLFCKMKHEGFKP), 147–182 (DNFTFASVLAGLALVADDEKQCVQFHAAALKSGAGY), 183–217 (ITSVSNALVSVYSKCASSPSLLHSARKVFDEILEK), 218–248 (DERSWTTMMTGYVKNGYFDLGEELLEGMDDN), 250–284 (KLVAYNAMISGYVNRGFYQEALEMVRRMVSSGIEL), 285–315 (DEFTYPSVIRACATAGLLQLGKQVHAYVLRR), 319–349 (SFHFDNSLVSLYYKCGKFDEARAIFEKMPAK), 350–384 (DLVSWNALLSGYVSSGHIGEAKLIFKEMKEKNILS), 385–415 (WMIMISGLAENGFGEEGLKLFSCMKREGFEP), 416–450 (CDYAFSGAIKSCAVLGAYCNGQQYHAQLLKIGFDS), 451–481 (SLSAGNALITMYAKCGVVEEARQVFRTMPCL), 482–516 (DSVSWNALIAALGQHGHGAEAVDVYEEMLKKGIRP), 517–551 (DRITLLTVLTACSHAGLVDQGRKYFDSMETVYRIP), and 553–583 (GADHYARLIDLLCRSGKFSDAESVIESLPFK). Residues 588 to 663 (IWEALLSGCR…EVACSWIEME (76 aa)) form a type E motif region. A type E(+) motif region spans residues 664–694 (TQVHTFLVDDTSHPEAEAVYIYLQDLGKEMR). Residues 695 to 790 (RLGYVPDTSF…NGECSCGNFW (96 aa)) are type DYW motif.

This sequence belongs to the PPR family. PCMP-H subfamily.

The polypeptide is Pentatricopeptide repeat-containing protein At1g25360 (PCMP-H74) (Arabidopsis thaliana (Mouse-ear cress)).